A 241-amino-acid polypeptide reads, in one-letter code: Ribosomal RNA small subunit methyltransferase J (241 aa).

S-adenosyl-L-methionine-binding positions include 94 to 95 (RD) and aspartate 163.

The protein belongs to the methyltransferase superfamily. RsmJ family.

It localises to the cytoplasm. The enzyme catalyses guanosine(1516) in 16S rRNA + S-adenosyl-L-methionine = N(2)-methylguanosine(1516) in 16S rRNA + S-adenosyl-L-homocysteine + H(+). Its function is as follows. Specifically methylates the guanosine in position 1516 of 16S rRNA. The polypeptide is Ribosomal RNA small subunit methyltransferase J (Francisella tularensis subsp. tularensis (strain FSC 198)).